Reading from the N-terminus, the 416-residue chain is Putative competence-damage inducible protein (416 aa).

Belongs to the CinA family.

The polypeptide is Putative competence-damage inducible protein (Bacillus pumilus (strain SAFR-032)).